Reading from the N-terminus, the 426-residue chain is Colanic acid biosynthesis protein WcaK (426 aa).

Belongs to the polysaccharide pyruvyl transferase family.

Its pathway is slime biogenesis; slime polysaccharide biosynthesis. This is Colanic acid biosynthesis protein WcaK (wcaK) from Escherichia coli (strain K12).